The following is a 471-amino-acid chain: 6-phosphofructo-2-kinase/fructose-2,6-bisphosphatase 1 (471 aa).

At Ser-2 the chain carries N-acetylserine. A 6-phosphofructo-2-kinase region spans residues 2–250; sequence SREMGELTQT…AYYLMNIHVT (249 aa). At Ser-33 the chain carries Phosphoserine; by PKA. Position 49–57 (49–57) interacts with ATP; it reads GLPARGKTY. Arg-82 and Arg-105 together coordinate beta-D-fructose 6-phosphate. Residue Asp-131 is part of the active site. Positions 133 and 139 each coordinate beta-D-fructose 6-phosphate. The residue at position 141 (Ser-141) is a Phosphoserine. The active site involves Cys-161. ATP is bound at residue 170 to 175; that stretch reads NIKQVK. Residues Lys-175, Arg-196, and Tyr-200 each coordinate beta-D-fructose 6-phosphate. Residues 251–471 are fructose-2,6-bisphosphatase; sequence PRSIYLCRHG…EALDTVPAHY (221 aa). Arg-258 is a binding site for beta-D-fructose 2,6-bisphosphate. His-259 serves as the catalytic Tele-phosphohistidine intermediate. 3 residues coordinate beta-D-fructose 2,6-bisphosphate: Asn-265, Gly-271, and Arg-308. Glu-328 serves as the catalytic Proton donor/acceptor. 6 residues coordinate beta-D-fructose 2,6-bisphosphate: Tyr-339, Arg-353, Lys-357, Tyr-368, Gln-394, and Arg-398. Residue 350–353 coordinates ATP; the sequence is FALR. ATP-binding positions include 394–398 and Tyr-430; that span reads QAVMR.

It in the C-terminal section; belongs to the phosphoglycerate mutase family. As to quaternary structure, homodimer. As to expression, liver.

The enzyme catalyses beta-D-fructose 2,6-bisphosphate + H2O = beta-D-fructose 6-phosphate + phosphate. The catalysed reaction is beta-D-fructose 6-phosphate + ATP = beta-D-fructose 2,6-bisphosphate + ADP + H(+). Its activity is regulated as follows. Phosphorylation at Ser-33 inhibits the kinase and activates the bisphosphatase. Its function is as follows. Synthesis and degradation of fructose 2,6-bisphosphate. The sequence is that of 6-phosphofructo-2-kinase/fructose-2,6-bisphosphatase 1 from Rattus norvegicus (Rat).